The following is a 140-amino-acid chain: Small ribosomal subunit protein uS12 (140 aa).

A disordered region spans residues 1–44; the sequence is MPTFNQLVRKGRKTMEKNSQAPALQKGFNSLRKKTTDASAPQKR. D102 carries the post-translational modification 3-methylthioaspartic acid. Positions 120 to 140 are disordered; it reads VAKRRQARSKYGAKRPKEAKK. The span at 121–140 shows a compositional bias: basic residues; the sequence is AKRRQARSKYGAKRPKEAKK.

It belongs to the universal ribosomal protein uS12 family. Part of the 30S ribosomal subunit. Contacts proteins S8 and S17. May interact with IF1 in the 30S initiation complex.

With S4 and S5 plays an important role in translational accuracy. In terms of biological role, interacts with and stabilizes bases of the 16S rRNA that are involved in tRNA selection in the A site and with the mRNA backbone. Located at the interface of the 30S and 50S subunits, it traverses the body of the 30S subunit contacting proteins on the other side and probably holding the rRNA structure together. The combined cluster of proteins S8, S12 and S17 appears to hold together the shoulder and platform of the 30S subunit. The polypeptide is Small ribosomal subunit protein uS12 (Lachnoclostridium phytofermentans (strain ATCC 700394 / DSM 18823 / ISDg) (Clostridium phytofermentans)).